Consider the following 228-residue polypeptide: 3-dehydroquinate dehydratase (228 aa).

Residues Ser26, 51 to 53, and Arg84 contribute to the 3-dehydroquinate site; that span reads EIR. His127 (proton donor/acceptor) is an active-site residue. Lys150 functions as the Schiff-base intermediate with substrate in the catalytic mechanism. 3-dehydroquinate contacts are provided by Arg190, Thr209, and Gln213.

This sequence belongs to the type-I 3-dehydroquinase family. In terms of assembly, homodimer.

It carries out the reaction 3-dehydroquinate = 3-dehydroshikimate + H2O. Its pathway is metabolic intermediate biosynthesis; chorismate biosynthesis; chorismate from D-erythrose 4-phosphate and phosphoenolpyruvate: step 3/7. Functionally, involved in the third step of the chorismate pathway, which leads to the biosynthesis of aromatic amino acids. Catalyzes the cis-dehydration of 3-dehydroquinate (DHQ) and introduces the first double bond of the aromatic ring to yield 3-dehydroshikimate. This Thermoplasma acidophilum (strain ATCC 25905 / DSM 1728 / JCM 9062 / NBRC 15155 / AMRC-C165) protein is 3-dehydroquinate dehydratase.